A 602-amino-acid chain; its full sequence is Aspartate--tRNA(Asp/Asn) ligase (602 aa).

Residue Glu-176 coordinates L-aspartate. Residues 200–203 (QQFK) are aspartate. L-aspartate is bound by residues Arg-222 and His-452. 222–224 (RDE) is an ATP binding site. ATP is bound at residue Glu-490. Residue Arg-497 coordinates L-aspartate. An ATP-binding site is contributed by 542–545 (GIDR).

The protein belongs to the class-II aminoacyl-tRNA synthetase family. Type 1 subfamily. Homodimer.

The protein localises to the cytoplasm. The catalysed reaction is tRNA(Asx) + L-aspartate + ATP = L-aspartyl-tRNA(Asx) + AMP + diphosphate. Functionally, aspartyl-tRNA synthetase with relaxed tRNA specificity since it is able to aspartylate not only its cognate tRNA(Asp) but also tRNA(Asn). Reaction proceeds in two steps: L-aspartate is first activated by ATP to form Asp-AMP and then transferred to the acceptor end of tRNA(Asp/Asn). The chain is Aspartate--tRNA(Asp/Asn) ligase from Rickettsia conorii (strain ATCC VR-613 / Malish 7).